The primary structure comprises 98 residues: NADH-ubiquinone oxidoreductase chain 4L (98 aa).

3 helical membrane passes run 1 to 21, 29 to 49, and 61 to 81; these read MSIV…GMLI, SLLC…LIIL, and IILL…LVMV.

It belongs to the complex I subunit 4L family. Core subunit of respiratory chain NADH dehydrogenase (Complex I) which is composed of 45 different subunits.

Its subcellular location is the mitochondrion inner membrane. The catalysed reaction is a ubiquinone + NADH + 5 H(+)(in) = a ubiquinol + NAD(+) + 4 H(+)(out). Core subunit of the mitochondrial membrane respiratory chain NADH dehydrogenase (Complex I) which catalyzes electron transfer from NADH through the respiratory chain, using ubiquinone as an electron acceptor. Part of the enzyme membrane arm which is embedded in the lipid bilayer and involved in proton translocation. In Herpestes javanicus (Small Indian mongoose), this protein is NADH-ubiquinone oxidoreductase chain 4L (MT-ND4L).